The sequence spans 183 residues: Probable adenylyl-sulfate kinase (183 aa).

Residue 17–24 (GLPGSGKT) coordinates ATP. Ser91 (phosphoserine intermediate) is an active-site residue.

It belongs to the APS kinase family.

The enzyme catalyses adenosine 5'-phosphosulfate + ATP = 3'-phosphoadenylyl sulfate + ADP + H(+). It functions in the pathway sulfur metabolism; hydrogen sulfide biosynthesis; sulfite from sulfate: step 2/3. Catalyzes the synthesis of activated sulfate. This chain is Probable adenylyl-sulfate kinase (cysC), found in Aeropyrum pernix (strain ATCC 700893 / DSM 11879 / JCM 9820 / NBRC 100138 / K1).